The chain runs to 200 residues: Pyridoxal 5'-phosphate synthase subunit PdxT (200 aa).

50 to 52 (GES) contacts L-glutamine. Residue Cys82 is the Nucleophile of the active site. L-glutamine contacts are provided by residues Arg110 and 138–139 (IR). Residues His174 and Glu176 each act as charge relay system in the active site.

It belongs to the glutaminase PdxT/SNO family. In the presence of PdxS, forms a dodecamer of heterodimers. Only shows activity in the heterodimer.

The enzyme catalyses aldehydo-D-ribose 5-phosphate + D-glyceraldehyde 3-phosphate + L-glutamine = pyridoxal 5'-phosphate + L-glutamate + phosphate + 3 H2O + H(+). It catalyses the reaction L-glutamine + H2O = L-glutamate + NH4(+). It participates in cofactor biosynthesis; pyridoxal 5'-phosphate biosynthesis. Functionally, catalyzes the hydrolysis of glutamine to glutamate and ammonia as part of the biosynthesis of pyridoxal 5'-phosphate. The resulting ammonia molecule is channeled to the active site of PdxS. In Oceanobacillus iheyensis (strain DSM 14371 / CIP 107618 / JCM 11309 / KCTC 3954 / HTE831), this protein is Pyridoxal 5'-phosphate synthase subunit PdxT.